The following is a 1061-amino-acid chain: Transcription factor GTE10 (1061 aa).

Disordered stretches follow at residues 32-56 and 106-152; these read ERMNSEASPPLKRRRFGLNGDNNGV and NDHS…RLNV. A compositionally biased stretch (basic and acidic residues) spans 109–118; sequence SCSDGPRRPP. A Bromo domain is found at 156-262; it reads YTVASVMKEC…KYFESGWKSI (107 aa). Residues 304–386 enclose the NET domain; that stretch reads KLRVEPAKLV…DYLREKKKSM (83 aa). Disordered stretches follow at residues 443-518, 538-558, 606-645, and 710-1033; these read ACRN…LNEL, VPDEETAPPERQISPDSPDKR, KERLQAEAKAAEEARRKAKAEAAEKARREREQEREAARQA, and HLGL…GNGK. Residues 448–476 are compositionally biased toward low complexity; sequence ESSSSSSSSSESGSSSSDSDSCSSSGSET. The segment covering 477–506 has biased composition (basic and acidic residues); that stretch reads DSIKASKPTSREEKKQPGVGIDKKEDDSNS. The stretch at 588 to 658 forms a coiled coil; the sequence is PEKLRIEREE…MEKTVEINEG (71 aa). Basic and acidic residues-rich tracts occupy residues 733 to 755, 770 to 792, 828 to 852, 860 to 883, and 912 to 929; these read RKVEDNPFDRSEKQEHSPHRVEG, EAHDNGDQEDGKPINPNEIERQL, EEVHPLDRSEGRTLSPHRKEREDPR, VSEKAQDYENQRDEKINQSEREEQ, and LSLDKSEGQTLSPHREEG. Residues 852–893 adopt a coiled-coil conformation; that stretch reads RASGNEESVSEKAQDYENQRDEKINQSEREEQLENVLEQESS. The segment covering 940 to 949 has biased composition (polar residues); the sequence is LVSQKTQDNG. Composition is skewed to basic and acidic residues over residues 952 to 962 and 990 to 1002; these read EDEKSINKIEG and GEQKSEVVEKGVE.

In terms of assembly, interacts with TIP/NAC091. In terms of tissue distribution, widely expressed in all tissues.

The protein localises to the nucleus. Its function is as follows. Acts as a negative regulator in plant response to changes in environmental conditions through the control of ABA-regulated gene expression. This is Transcription factor GTE10 (GTE10) from Arabidopsis thaliana (Mouse-ear cress).